The sequence spans 472 residues: Sarcalumenin (472 aa).

The signal sequence occupies residues 1-20 (MKRLNLLCCCVASLLLLGTA). N-linked (GlcNAc...) asparagine glycosylation occurs at Leu59. Positions 89-330 (ITSKPMVLFL…IENRMENKIA (242 aa)) constitute a Dynamin-type G domain. The tract at residues 99–106 (GPWSVGKS) is G1 motif. Residues 127–128 (EP) form a G2 motif region. Residues 189–192 (DTPG) are G3 motif. Positions 254–257 (NKAD) are G4 motif. Leu278 is a region of interest (G5 motif). 2 N-linked (GlcNAc...) asparagine glycosylation sites follow: Asn280 and Asn388.

This sequence belongs to the TRAFAC class dynamin-like GTPase superfamily. Dynamin/Fzo/YdjA family. In terms of processing, N-glycosylated.

The protein localises to the sarcoplasmic reticulum lumen. Its subcellular location is the sarcoplasmic reticulum membrane. In Gallus gallus (Chicken), this protein is Sarcalumenin (SRL).